The chain runs to 728 residues: Plakophilin-1 (728 aa).

The interval 1-235 (MNHSPLKTAL…SFGHSRASSK (235 aa)) is required for binding to single stranded DNA. The interval 1-287 (MNHSPLKTAL…ESAKQQVYQL (287 aa)) is required for interaction with EIF4A1. Position 4 is a phosphoserine; by RIPK4 (serine 4). The disordered stretch occupies residues 48–69 (TVKRQKSKSSQSSTLSHSNRGS). 2 phosphorylation in this region is required for cytoplasmic localization and protein stabilization regions span residues 54–69 (SKSSQSSTLSHSNRGS) and 117–192 (RFSS…STCS). Phosphoserine is present on serine 119. Phosphoserine; by RIPK4 is present on serine 120. Serine 122 bears the Phosphoserine mark. A Phosphoserine; by RIPK4 modification is found at serine 143. Residues 161-270 (YCDPRGTLRK…KYQAIGAYYI (110 aa)) form a required for WNT-mediated nuclear localization region. 9 ARM repeats span residues 244-275 (SGLTIPKAVQYLCSQDEKYQAIGAYYIQHTCF), 276-317 (QDES…NLVF), 318-360 (RSTP…NLSS), 361-412 (TDEL…GCLR), 413-443 (NLSSADAGRQTMRNYSGLIDSLMAYVQNCVA), 505-536 (NYDCPLPEEETNPKGSSWLYHSDAIRTYLNLM), 537-583 (GKSK…IARL), 584-629 (LQSG…SHTG), and 630-694 (NTSN…DMWA).

Belongs to the beta-catenin family. In terms of assembly, part of a complex that contains DSG3, PKP1, YAP1 and YWHAG; the complex is required for localization of DSG3 and YAP1 to the cell membrane in keratinocytes. Interacts (via N-terminus) with KRT5/CK5, KRT8/CK8 (via rod domain), KRT15/CK15 and KRT18/CK18 (via rod domain) as part of intermediate filaments. Interacts with VIM (via rod domain). Interacts with DSP. Interacts with DES. Interacts with FXR1; the interaction may facilitate the binding of PKP1 to PKP2, PKP3 and DSP mRNA. Interacts (via N-terminus) with EIF4A1; the interaction promotes EIF4A1 recruitment to the cap-dependent translation complex and EIF4A1 ATPase activity. Interacts with TJP1/ZO-1; the interaction facilitates TJP1/ZO-1 localization to the plasma membrane. Interacts (when phosphorylated) with YWHAG; the interaction results in translocation of PKP1 to the cytoplasm and loss of intercellular adhesion in keratinocytes. Post-translationally, phosphorylated by AKT2; required for interaction with YWHAG and subsequent localization away from desmosomes to the cytoplasm. Phosphorylation of Ser-119 by AKT2 promotes PKP1-driven cap-dependent mRNA translation and decreases intercellular adhesion, phosphorylation is promoted by insulin. Phosphorylation by RIPK4 at the N-terminus is required for its role in differentiation of keratinocytes and DSG1 localization at cell junctions. Expressed in undifferentiated keratinocytes of the epidermis at birth, expression increases as differentiation proceeds (at protein level). Expressed in the cervical loop during early tooth differentiation, expression is then present between ameloblasts, at ameloblast-ameloblast junctions and in the stratum intermedium during pre-secretory and secretory stages of tooth development (at protein level).

Its subcellular location is the nucleus. The protein resides in the cytoplasm. The protein localises to the perinuclear region. It is found in the cell junction. It localises to the desmosome. Its subcellular location is the cell membrane. The protein resides in the stress granule. A component of desmosome cell-cell junctions which are required for positive regulation of cellular adhesion. Plays a role in desmosome protein expression regulation and localization to the desmosomal plaque, thereby maintaining cell sheet integrity and anchorage of desmosomes to intermediate filaments. Required for localization of DSG3 and YAP1 to the cell membrane in keratinocytes in response to mechanical strain, via the formation of an interaction complex composed of DSG3, YAP1, PKP1 and YWHAG. Positively regulates differentiation of keratinocytes, potentially via promoting localization of DSG1 at desmosome cell junctions. Required for calcium-independent development and maturation of desmosome plaques specifically at lateral cell-cell contacts in differentiating keratinocytes. Plays a role in the maintenance of DSG3 protein abundance, DSG3 clustering and localization of these clusters to the cell membrane in keratinocytes. May also promote keratinocyte proliferation and morphogenesis during postnatal development. Required for tight junction inside-out transepidermal barrier function of the skin, and is thereby involved in neonatal survival possibly via maintenance of hydration levels. Promotes Wnt-mediated proliferation and differentiation of ameloblasts, via facilitating TJP1/ZO-1 localization to tight junctions. Binds single-stranded DNA (ssDNA), and may thereby play a role in sensing DNA damage and promoting cell survival. Positively regulates cap-dependent translation and as a result cell proliferation, via recruitment of EIF4A1 to the initiation complex and promotion of EIF4A1 ATPase activity. Regulates the mRNA stability and protein abundance of desmosome components PKP2, PKP3, DSC2 and DSP, potentially via its interaction with FXR1. The sequence is that of Plakophilin-1 (Pkp1) from Mus musculus (Mouse).